Consider the following 205-residue polypeptide: MSQTALQKVVEHARAGLEVRESFFEQYSQLVVDVSKALAVRLALGSKILFCGNGGSAADCQHLAAELVNRFKLERPPLPGIALTTDSSILTAIGNDYSYEMVFEKQVQALGQPGDVLVGISTSGTSPNVISALKEAKRKGMVTIGMTGISAGEMLPICDHIISVPSKDTAVIQEVHIAVGHLFCHLIDHFLFEAVGELEPYLSGE.

The SIS domain maps to 38 to 200 (LAVRLALGSK…LFEAVGELEP (163 aa)). A substrate-binding site is contributed by 53-55 (NGG). The Zn(2+) site is built by H62 and E66. Residues E66, 95–96 (ND), 121–123 (STS), S126, and Q173 each bind substrate. Residues Q173 and H181 each contribute to the Zn(2+) site.

Belongs to the SIS family. GmhA subfamily. Homotetramer. It depends on Zn(2+) as a cofactor.

It is found in the cytoplasm. The enzyme catalyses 2 D-sedoheptulose 7-phosphate = D-glycero-alpha-D-manno-heptose 7-phosphate + D-glycero-beta-D-manno-heptose 7-phosphate. The protein operates within carbohydrate biosynthesis; D-glycero-D-manno-heptose 7-phosphate biosynthesis; D-glycero-alpha-D-manno-heptose 7-phosphate and D-glycero-beta-D-manno-heptose 7-phosphate from sedoheptulose 7-phosphate: step 1/1. Functionally, catalyzes the isomerization of sedoheptulose 7-phosphate in D-glycero-D-manno-heptose 7-phosphate. The sequence is that of Phosphoheptose isomerase from Maridesulfovibrio salexigens (strain ATCC 14822 / DSM 2638 / NCIMB 8403 / VKM B-1763) (Desulfovibrio salexigens).